Consider the following 127-residue polypeptide: Small ribosomal subunit protein uS12 (127 aa).

Aspartate 89 carries the 3-methylthioaspartic acid modification. Positions 101-127 are disordered; the sequence is ALDTSGVAGRTQRRSKYGAKRPKEAKK. The span at 111–127 shows a compositional bias: basic residues; it reads TQRRSKYGAKRPKEAKK.

It belongs to the universal ribosomal protein uS12 family. Part of the 30S ribosomal subunit. Contacts proteins S8 and S17. May interact with IF1 in the 30S initiation complex.

Its function is as follows. With S4 and S5 plays an important role in translational accuracy. Functionally, interacts with and stabilizes bases of the 16S rRNA that are involved in tRNA selection in the A site and with the mRNA backbone. Located at the interface of the 30S and 50S subunits, it traverses the body of the 30S subunit contacting proteins on the other side and probably holding the rRNA structure together. The combined cluster of proteins S8, S12 and S17 appears to hold together the shoulder and platform of the 30S subunit. This is Small ribosomal subunit protein uS12 from Flavobacterium psychrophilum (strain ATCC 49511 / DSM 21280 / CIP 103535 / JIP02/86).